We begin with the raw amino-acid sequence, 61 residues long: Sec-independent protein translocase protein TatA (61 aa).

The helical transmembrane segment at 1 to 21 (MFGLGITEILLILGIIILIFG) threads the bilayer.

This sequence belongs to the TatA/E family. The Tat system comprises two distinct complexes: a TatABC complex, containing multiple copies of TatA, TatB and TatC subunits, and a separate TatA complex, containing only TatA subunits. Substrates initially bind to the TatABC complex, which probably triggers association of the separate TatA complex to form the active translocon.

It localises to the cell inner membrane. Functionally, part of the twin-arginine translocation (Tat) system that transports large folded proteins containing a characteristic twin-arginine motif in their signal peptide across membranes. TatA could form the protein-conducting channel of the Tat system. This is Sec-independent protein translocase protein TatA from Maridesulfovibrio salexigens (strain ATCC 14822 / DSM 2638 / NCIMB 8403 / VKM B-1763) (Desulfovibrio salexigens).